Here is a 285-residue protein sequence, read N- to C-terminus: Pantothenate synthetase (285 aa).

Residue Met-30–His-37 participates in ATP binding. His-37 acts as the Proton donor in catalysis. Position 61 (Gln-61) interacts with (R)-pantoate. Gln-61 provides a ligand contact to beta-alanine. Residue Gly-148–Asp-151 participates in ATP binding. Gln-154 is a binding site for (R)-pantoate. Residues Val-177 and Leu-185–Arg-188 each bind ATP.

The protein belongs to the pantothenate synthetase family. As to quaternary structure, homodimer.

The protein resides in the cytoplasm. The catalysed reaction is (R)-pantoate + beta-alanine + ATP = (R)-pantothenate + AMP + diphosphate + H(+). The protein operates within cofactor biosynthesis; (R)-pantothenate biosynthesis; (R)-pantothenate from (R)-pantoate and beta-alanine: step 1/1. In terms of biological role, catalyzes the condensation of pantoate with beta-alanine in an ATP-dependent reaction via a pantoyl-adenylate intermediate. The chain is Pantothenate synthetase from Leptospira interrogans serogroup Icterohaemorrhagiae serovar Lai (strain 56601).